The chain runs to 132 residues: Phosphoribosyl-AMP cyclohydrolase (132 aa).

A Mg(2+)-binding site is contributed by Asp85. Cys86 provides a ligand contact to Zn(2+). The Mg(2+) site is built by Asp87 and Asp89. 2 residues coordinate Zn(2+): Cys102 and Cys109.

This sequence belongs to the PRA-CH family. In terms of assembly, homodimer. Mg(2+) serves as cofactor. Requires Zn(2+) as cofactor.

Its subcellular location is the cytoplasm. The enzyme catalyses 1-(5-phospho-beta-D-ribosyl)-5'-AMP + H2O = 1-(5-phospho-beta-D-ribosyl)-5-[(5-phospho-beta-D-ribosylamino)methylideneamino]imidazole-4-carboxamide. The protein operates within amino-acid biosynthesis; L-histidine biosynthesis; L-histidine from 5-phospho-alpha-D-ribose 1-diphosphate: step 3/9. Catalyzes the hydrolysis of the adenine ring of phosphoribosyl-AMP. This chain is Phosphoribosyl-AMP cyclohydrolase, found in Frankia alni (strain DSM 45986 / CECT 9034 / ACN14a).